A 222-amino-acid polypeptide reads, in one-letter code: Probable nicotinate-nucleotide adenylyltransferase (222 aa).

This sequence belongs to the NadD family.

The enzyme catalyses nicotinate beta-D-ribonucleotide + ATP + H(+) = deamido-NAD(+) + diphosphate. The protein operates within cofactor biosynthesis; NAD(+) biosynthesis; deamido-NAD(+) from nicotinate D-ribonucleotide: step 1/1. Functionally, catalyzes the reversible adenylation of nicotinate mononucleotide (NaMN) to nicotinic acid adenine dinucleotide (NaAD). This chain is Probable nicotinate-nucleotide adenylyltransferase, found in Stenotrophomonas maltophilia (strain K279a).